The primary structure comprises 335 residues: MAIPKVGINGFGRIGRIVLRNAILTGKIQVVAVNDPFIDLDYMAYMFKYDSTHGRFEGSVETKGGKLVIDGHSIDVHNERDPANIKWSASGAEYVIESTGVFTTKETASAHLKGGAKRVIISAPSKDAPMFVVGVNLEKFNPSEKVISNASCTTNCLAPLAKVINDTFGIEEGLMTTVHATTATQKTVDGPSKKDWRGGRGASANIIPSSTGAAKAVGKVIPALNGKLTGMAFRVPTPDVSVVDLTVKLAKPTNYEDIKAAIKAASEGPMKGVLGYTEDSVVSTDFCGDNHSSIFDASAGIQLSPQFVKLVSWYDNEWGYSHRVVDLVAYTASKD.

NAD(+)-binding positions include 13–14, Asp-35, and Arg-80; that span reads RI. Phosphoserine occurs at positions 125 and 151. 151-153 serves as a coordination point for D-glyceraldehyde 3-phosphate; that stretch reads SCT. The Nucleophile role is filled by Cys-152. Phosphothreonine is present on residues Thr-153, Thr-154, Thr-182, and Thr-184. Residue Thr-182 coordinates D-glyceraldehyde 3-phosphate. 3 positions are modified to phosphoserine: Ser-192, Ser-203, and Ser-209. Thr-211 is subject to Phosphothreonine. D-glyceraldehyde 3-phosphate-binding positions include 211-212 and Arg-234; that span reads TG. Thr-237 is modified (phosphothreonine). Ser-241 is subject to Phosphoserine. Asn-316 provides a ligand contact to NAD(+).

It belongs to the glyceraldehyde-3-phosphate dehydrogenase family. In terms of assembly, homotetramer.

It localises to the cytoplasm. It catalyses the reaction D-glyceraldehyde 3-phosphate + phosphate + NAD(+) = (2R)-3-phospho-glyceroyl phosphate + NADH + H(+). It participates in carbohydrate degradation; glycolysis; pyruvate from D-glyceraldehyde 3-phosphate: step 1/5. This is Glyceraldehyde-3-phosphate dehydrogenase 2 (gpd3) from Schizosaccharomyces pombe (strain 972 / ATCC 24843) (Fission yeast).